Here is a 338-residue protein sequence, read N- to C-terminus: tRNA N6-adenosine threonylcarbamoyltransferase (338 aa).

Fe cation is bound by residues His111 and His115. Substrate contacts are provided by residues 134-138 (LVSGG), Asp167, Gly180, and Asn272. Asp300 serves as a coordination point for Fe cation.

Belongs to the KAE1 / TsaD family. It depends on Fe(2+) as a cofactor.

The protein resides in the cytoplasm. The catalysed reaction is L-threonylcarbamoyladenylate + adenosine(37) in tRNA = N(6)-L-threonylcarbamoyladenosine(37) in tRNA + AMP + H(+). In terms of biological role, required for the formation of a threonylcarbamoyl group on adenosine at position 37 (t(6)A37) in tRNAs that read codons beginning with adenine. Is involved in the transfer of the threonylcarbamoyl moiety of threonylcarbamoyl-AMP (TC-AMP) to the N6 group of A37, together with TsaE and TsaB. TsaD likely plays a direct catalytic role in this reaction. This chain is tRNA N6-adenosine threonylcarbamoyltransferase, found in Shewanella baltica (strain OS155 / ATCC BAA-1091).